The sequence spans 86 residues: Co-chaperonin GroES (86 aa).

The protein belongs to the GroES chaperonin family. Heptamer of 7 subunits arranged in a ring. Interacts with the chaperonin GroEL.

Its subcellular location is the cytoplasm. Functionally, together with the chaperonin GroEL, plays an essential role in assisting protein folding. The GroEL-GroES system forms a nano-cage that allows encapsulation of the non-native substrate proteins and provides a physical environment optimized to promote and accelerate protein folding. GroES binds to the apical surface of the GroEL ring, thereby capping the opening of the GroEL channel. The sequence is that of Co-chaperonin GroES from Campylobacter jejuni subsp. doylei (strain ATCC BAA-1458 / RM4099 / 269.97).